The chain runs to 447 residues: UPF0210 protein LBUL_0934 (447 aa).

Belongs to the UPF0210 family. As to quaternary structure, homodimer.

The protein is UPF0210 protein LBUL_0934 of Lactobacillus delbrueckii subsp. bulgaricus (strain ATCC BAA-365 / Lb-18).